Consider the following 309-residue polypeptide: Probable manganese-dependent inorganic pyrophosphatase (309 aa).

Mn(2+) contacts are provided by H9, D13, D15, D75, H97, and D149.

The protein belongs to the PPase class C family. The cofactor is Mn(2+).

The protein localises to the cytoplasm. The enzyme catalyses diphosphate + H2O = 2 phosphate + H(+). The sequence is that of Probable manganese-dependent inorganic pyrophosphatase from Bacillus mycoides (strain KBAB4) (Bacillus weihenstephanensis).